We begin with the raw amino-acid sequence, 233 residues long: MADS-box transcription factor 56 (233 aa).

Residues 1 to 61 (MVRGRTELKR…GRLYEFASAP (61 aa)) enclose the MADS-box domain. Residues 87–177 (IQQVKDDTLG…RGKHRNLEAA (91 aa)) form the K-box domain.

The protein localises to the nucleus. Its function is as follows. Probable transcription factor. This chain is MADS-box transcription factor 56 (MADS56), found in Oryza sativa subsp. japonica (Rice).